A 246-amino-acid chain; its full sequence is Phosphate import ATP-binding protein PstB (246 aa).

The ABC transporter domain occupies 3–241 (AKTTNLNLFY…PKQEKTKAYL (239 aa)). 35 to 42 (GASGCGKS) contacts ATP.

It belongs to the ABC transporter superfamily. Phosphate importer (TC 3.A.1.7) family. In terms of assembly, the complex is composed of two ATP-binding proteins (PstB), two transmembrane proteins (PstC and PstA) and a solute-binding protein (PstS).

It localises to the cell inner membrane. The catalysed reaction is phosphate(out) + ATP + H2O = ADP + 2 phosphate(in) + H(+). Functionally, part of the ABC transporter complex PstSACB involved in phosphate import. Responsible for energy coupling to the transport system. This is Phosphate import ATP-binding protein PstB from Campylobacter jejuni subsp. jejuni serotype O:2 (strain ATCC 700819 / NCTC 11168).